A 177-amino-acid polypeptide reads, in one-letter code: Large ribosomal subunit protein uL6 (177 aa).

It belongs to the universal ribosomal protein uL6 family. As to quaternary structure, part of the 50S ribosomal subunit.

Functionally, this protein binds to the 23S rRNA, and is important in its secondary structure. It is located near the subunit interface in the base of the L7/L12 stalk, and near the tRNA binding site of the peptidyltransferase center. The protein is Large ribosomal subunit protein uL6 of Sphingopyxis alaskensis (strain DSM 13593 / LMG 18877 / RB2256) (Sphingomonas alaskensis).